A 467-amino-acid polypeptide reads, in one-letter code: Polygalacturonase (467 aa).

Positions 1–27 are cleaved as a signal peptide; it reads MALQRRFFQFVIITLLIPSFILGYTSA. Asp-283 acts as the Proton donor in catalysis. The N-linked (GlcNAc...) asparagine glycan is linked to Asn-290. The active site involves His-306.

The protein belongs to the glycosyl hydrolase 28 family.

It localises to the secreted. The protein resides in the cell wall. The catalysed reaction is (1,4-alpha-D-galacturonosyl)n+m + H2O = (1,4-alpha-D-galacturonosyl)n + (1,4-alpha-D-galacturonosyl)m.. Its function is as follows. Acts in concert with the pectinesterase, in the ripening process. Is involved in cell wall metabolism, specifically in polyuronide degradation. The chain is Polygalacturonase from Actinidia deliciosa (Kiwi).